A 238-amino-acid chain; its full sequence is Sugar fermentation stimulation protein homolog (238 aa).

The protein belongs to the SfsA family.

The chain is Sugar fermentation stimulation protein homolog from Alkalilimnicola ehrlichii (strain ATCC BAA-1101 / DSM 17681 / MLHE-1).